The sequence spans 270 residues: MQSKLLLSTKLTSQGKTQLDQYFVSPPFKVMTLPAYDDAWQNGLNAMQMSSSPGLLASDLLDIEISLADDTALSLNTQAFTRVQSMNEGDYATQKTCIKLGKNSRLFYLPHPLVLHKDSSFKQTTEIEMSEQSELIYGEIVAIGRVLNGERFAFRHFASYLRISYQNRPIIADRIQWLPAKMALTSLSQMEDFSHQGSLTYVNLAKNAVEIKAMVSELQALAAEQKNMLIGVSQLNEGGLMVRVLAHRADIIQHLFERIGQVLKAQSNIV.

It belongs to the UreD family. In terms of assembly, ureD, UreF and UreG form a complex that acts as a GTP-hydrolysis-dependent molecular chaperone, activating the urease apoprotein by helping to assemble the nickel containing metallocenter of UreC. The UreE protein probably delivers the nickel.

The protein localises to the cytoplasm. Functionally, required for maturation of urease via the functional incorporation of the urease nickel metallocenter. This Actinobacillus pleuropneumoniae serotype 7 (strain AP76) protein is Urease accessory protein UreD.